The chain runs to 74 residues: Benzylsuccinate synthase beta subunit (74 aa).

Heterohexamer composed of 2 alpha subunits, 2 beta subunits and 2 gamma subunits.

The enzyme catalyses toluene + fumarate = 2-benzylsuccinate. The protein operates within xenobiotic degradation; toluene degradation. Its activity is regulated as follows. Activated by the benzylsuccinate synthase activating enzyme BssD. Rapidly inactivated by oxygen. Its function is as follows. Catalyzes the addition of fumarate to the methyl group of toluene, leading to the formation of benzylsuccinate. This Thauera aromatica protein is Benzylsuccinate synthase beta subunit (bssB).